A 295-amino-acid polypeptide reads, in one-letter code: MASLKDLKNRIGSVKSTQKITKAMQMVAAAKLRRAQEAAEAARPYAQRMAAVMANLSTAMSGTPGASPLLVGTGKSDAYLLVVMTADRGLCGGFNTNIVKKARERINALKAEGKDVKVICVGKKGADQLKRNFASLIVDKMELSGEKTITGATSVRIGDKIRHMFENGEFDVCELVSAEFVSVISQKPRAKVLIPAIDAIDEGVERPDLGGAVYDAEPDEETILNVLLPRYADTVILSALLENVAGEMGAKMAAMDNATRNAGELIDKLNLVYNRTRQAQITTELTEIISGAEAL.

It belongs to the ATPase gamma chain family. F-type ATPases have 2 components, CF(1) - the catalytic core - and CF(0) - the membrane proton channel. CF(1) has five subunits: alpha(3), beta(3), gamma(1), delta(1), epsilon(1). CF(0) has three main subunits: a, b and c.

Its subcellular location is the cell inner membrane. In terms of biological role, produces ATP from ADP in the presence of a proton gradient across the membrane. The gamma chain is believed to be important in regulating ATPase activity and the flow of protons through the CF(0) complex. This is ATP synthase gamma chain from Maricaulis maris (strain MCS10) (Caulobacter maris).